A 107-amino-acid chain; its full sequence is uncharacterized protein (107 aa).

Residues 37 to 59 (MVFSFLTVMPGDFIKCLFLRFFV) traverse the membrane as a helical segment.

The protein localises to the membrane. This is an uncharacterized protein from Saccharomyces cerevisiae (strain ATCC 204508 / S288c) (Baker's yeast).